The chain runs to 439 residues: Xaa-Pro dipeptidase (439 aa).

5 residues coordinate Mn(2+): aspartate 244, aspartate 255, histidine 335, glutamate 380, and glutamate 419.

Belongs to the peptidase M24B family. Bacterial-type prolidase subfamily. It depends on Mn(2+) as a cofactor.

The enzyme catalyses Xaa-L-Pro dipeptide + H2O = an L-alpha-amino acid + L-proline. Its function is as follows. Splits dipeptides with a prolyl residue in the C-terminal position. This is Xaa-Pro dipeptidase from Shewanella sediminis (strain HAW-EB3).